The following is a 136-amino-acid chain: Single-stranded DNA-binding protein 1 (136 aa).

The region spanning 4–109 (LNKMQLIGNL…IMAKEMQMLG (106 aa)) is the SSB domain. Residues 109-136 (GKKQDNNKVGNARHGDALPADEDDYYDF) form a disordered region. A compositionally biased stretch (acidic residues) spans 127–136 (PADEDDYYDF).

Homotetramer.

The sequence is that of Single-stranded DNA-binding protein 1 (ssb1) from Xylella fastidiosa (strain 9a5c).